The following is a 493-amino-acid chain: Putative MgpC-like protein MPN_414 (493 aa).

Over residues 1–14 the composition is skewed to polar residues; that stretch reads MKPTSLPKNFTNNP. Disordered regions lie at residues 1–92 and 441–493; these read MKPT…GHNS and KSAR…SGNH. Composition is skewed to basic and acidic residues over residues 25–34 and 44–56; these read DNGRAYRKLN and DSTK…DKDG. Polar residues-rich tracts occupy residues 72–92 and 445–472; these read VSST…GHNS and ENAQ…SPCR. The span at 482-493 shows a compositional bias: basic and acidic residues; the sequence is RVTEEERSSGNH.

The protein belongs to the MgpC family.

The chain is Putative MgpC-like protein MPN_414 from Mycoplasma pneumoniae (strain ATCC 29342 / M129 / Subtype 1) (Mycoplasmoides pneumoniae).